The following is a 678-amino-acid chain: Exoribonuclease 2 (678 aa).

One can recognise an RNB domain in the interval 193-521; it reads REDLTALPFV…INHRLLKAHI (329 aa). One can recognise an S1 motif domain in the interval 568–650; that stretch reads ETRFQAEIFD…ENRSLVGKPT (83 aa). A disordered region spans residues 659-678; that stretch reads ETQTSAEQPAEGAENNEPQV.

Belongs to the RNR ribonuclease family. RNase II subfamily.

The protein resides in the cytoplasm. It catalyses the reaction Exonucleolytic cleavage in the 3'- to 5'-direction to yield nucleoside 5'-phosphates.. Functionally, involved in mRNA degradation. Hydrolyzes single-stranded polyribonucleotides processively in the 3' to 5' direction. The protein is Exoribonuclease 2 of Vibrio cholerae serotype O1 (strain ATCC 39315 / El Tor Inaba N16961).